Consider the following 910-residue polypeptide: Alanine--tRNA ligase (910 aa).

Residues 488–505 (RHEEKKEDSKSEKGENTA) are compositionally biased toward basic and acidic residues. The disordered stretch occupies residues 488–507 (RHEEKKEDSKSEKGENTAEK). Positions 614, 618, 718, and 722 each coordinate Zn(2+).

This sequence belongs to the class-II aminoacyl-tRNA synthetase family. The cofactor is Zn(2+).

It localises to the cytoplasm. It carries out the reaction tRNA(Ala) + L-alanine + ATP = L-alanyl-tRNA(Ala) + AMP + diphosphate. In terms of biological role, catalyzes the attachment of alanine to tRNA(Ala) in a two-step reaction: alanine is first activated by ATP to form Ala-AMP and then transferred to the acceptor end of tRNA(Ala). Also edits incorrectly charged Ser-tRNA(Ala) and Gly-tRNA(Ala) via its editing domain. This is Alanine--tRNA ligase from Methanococcus aeolicus (strain ATCC BAA-1280 / DSM 17508 / OCM 812 / Nankai-3).